The primary structure comprises 183 residues: Orotate phosphoribosyltransferase (183 aa).

Residues arginine 21, lysine 88, and 112 to 120 (EDVVTTGES) contribute to the 5-phospho-alpha-D-ribose 1-diphosphate site. Threonine 116 and arginine 144 together coordinate orotate.

This sequence belongs to the purine/pyrimidine phosphoribosyltransferase family. PyrE subfamily. In terms of assembly, homodimer. Requires Mg(2+) as cofactor.

It catalyses the reaction orotidine 5'-phosphate + diphosphate = orotate + 5-phospho-alpha-D-ribose 1-diphosphate. Its pathway is pyrimidine metabolism; UMP biosynthesis via de novo pathway; UMP from orotate: step 1/2. Its function is as follows. Catalyzes the transfer of a ribosyl phosphate group from 5-phosphoribose 1-diphosphate to orotate, leading to the formation of orotidine monophosphate (OMP). This is Orotate phosphoribosyltransferase from Thermus thermophilus (strain ATCC BAA-163 / DSM 7039 / HB27).